The chain runs to 1435 residues: DNA polymerase III PolC-type (1435 aa).

Residues 404–562 (YVVYDIETTG…YDSSVLTNIF (159 aa)) enclose the Exonuclease domain.

It belongs to the DNA polymerase type-C family. PolC subfamily.

It is found in the cytoplasm. The catalysed reaction is DNA(n) + a 2'-deoxyribonucleoside 5'-triphosphate = DNA(n+1) + diphosphate. Functionally, required for replicative DNA synthesis. This DNA polymerase also exhibits 3' to 5' exonuclease activity. This chain is DNA polymerase III PolC-type, found in Mycoplasmopsis pulmonis (strain UAB CTIP) (Mycoplasma pulmonis).